The sequence spans 512 residues: ATP synthase subunit alpha (512 aa).

169-176 is a binding site for ATP; sequence GDRQTGKT.

The protein belongs to the ATPase alpha/beta chains family. As to quaternary structure, F-type ATPases have 2 components, CF(1) - the catalytic core - and CF(0) - the membrane proton channel. CF(1) has five subunits: alpha(3), beta(3), gamma(1), delta(1), epsilon(1). CF(0) has four main subunits: a(1), b(1), b'(1) and c(9-12).

The protein resides in the cell inner membrane. It carries out the reaction ATP + H2O + 4 H(+)(in) = ADP + phosphate + 5 H(+)(out). Produces ATP from ADP in the presence of a proton gradient across the membrane. The alpha chain is a regulatory subunit. The protein is ATP synthase subunit alpha of Cereibacter sphaeroides (strain ATCC 17025 / ATH 2.4.3) (Rhodobacter sphaeroides).